A 380-amino-acid chain; its full sequence is Flap endonuclease 1-A (380 aa).

The N-domain stretch occupies residues 1-105 (MGIKGLTKLL…QELAKRYSKR (105 aa)). A Mg(2+)-binding site is contributed by Asp34. Position 71 (Arg71) interacts with DNA. Mg(2+) contacts are provided by Asp87, Glu159, Glu161, Asp180, and Asp182. An I-domain region spans residues 123–254 (AIEKFSKRTV…QTALKLIRQH (132 aa)). Glu159 provides a ligand contact to DNA. DNA-binding residues include Gly232 and Asp234. Asp234 serves as a coordination point for Mg(2+). The tract at residues 336–344 (SQGRLESFF) is interaction with PCNA. The disordered stretch occupies residues 351–380 (SVPLKRKDTSEKPTKAVANKKTKGAGGKKK). The segment covering 355–364 (KRKDTSEKPT) has biased composition (basic and acidic residues). Basic residues predominate over residues 368–380 (ANKKTKGAGGKKK).

It belongs to the XPG/RAD2 endonuclease family. FEN1 subfamily. Interacts with PCNA. Three molecules of FEN1 bind to one PCNA trimer with each molecule binding to one PCNA monomer. PCNA stimulates the nuclease activity without altering cleavage specificity. Requires Mg(2+) as cofactor. Post-translationally, phosphorylated. Phosphorylation upon DNA damage induces relocalization to the nuclear plasma. As to expression, strongly expressed in proliferating tissues: root and shoot apical meristem, tiller bud, leaf, ligule primordia, marginal meristem of young leaves and panicles. Not expressed in mature leaves when exposed to UV.

The protein localises to the nucleus. It localises to the nucleolus. Its subcellular location is the nucleoplasm. The protein resides in the mitochondrion. Inhibited by NaCl. In terms of biological role, structure-specific nuclease with 5'-flap endonuclease and 5'-3' exonuclease activities involved in DNA replication and repair. During DNA replication, cleaves the 5'-overhanging flap structure that is generated by displacement synthesis when DNA polymerase encounters the 5'-end of a downstream Okazaki fragment. It enters the flap from the 5'-end and then tracks to cleave the flap base, leaving a nick for ligation. Also involved in the long patch base excision repair (LP-BER) pathway, by cleaving within the apurinic/apyrimidinic (AP) site-terminated flap. Acts as a genome stabilization factor that prevents flaps from equilibrating into structures that lead to duplications and deletions. Also possesses 5'-3' exonuclease activity on nicked or gapped double-stranded DNA, and exhibits RNase H activity. Also involved in replication and repair of rDNA and in repairing mitochondrial DNA. May be required for cell proliferation. The protein is Flap endonuclease 1-A of Oryza sativa subsp. japonica (Rice).